Here is a 252-residue protein sequence, read N- to C-terminus: Isoprenyl transferase (252 aa).

Asp32 is an active-site residue. Asp32 lines the Mg(2+) pocket. Residues 33-36, Trp37, Arg45, His49, and 77-79 each bind substrate; these read GNGR and STE. Asn80 serves as the catalytic Proton acceptor. Residues Trp81, Arg83, Arg200, and 206–208 each bind substrate; that span reads RLS. Residue Glu219 coordinates Mg(2+).

This sequence belongs to the UPP synthase family. Homodimer. The cofactor is Mg(2+).

In terms of biological role, catalyzes the condensation of isopentenyl diphosphate (IPP) with allylic pyrophosphates generating different type of terpenoids. The sequence is that of Isoprenyl transferase from Oceanobacillus iheyensis (strain DSM 14371 / CIP 107618 / JCM 11309 / KCTC 3954 / HTE831).